The chain runs to 378 residues: 4-hydroxy-3-methylbut-2-en-1-yl diphosphate synthase (flavodoxin) (378 aa).

The [4Fe-4S] cluster site is built by C268, C271, C303, and E310. Positions 359–378 (AEREKEKEKEKEKEKETQEQ) are disordered.

The protein belongs to the IspG family. [4Fe-4S] cluster serves as cofactor.

The enzyme catalyses (2E)-4-hydroxy-3-methylbut-2-enyl diphosphate + oxidized [flavodoxin] + H2O + 2 H(+) = 2-C-methyl-D-erythritol 2,4-cyclic diphosphate + reduced [flavodoxin]. It functions in the pathway isoprenoid biosynthesis; isopentenyl diphosphate biosynthesis via DXP pathway; isopentenyl diphosphate from 1-deoxy-D-xylulose 5-phosphate: step 5/6. In terms of biological role, converts 2C-methyl-D-erythritol 2,4-cyclodiphosphate (ME-2,4cPP) into 1-hydroxy-2-methyl-2-(E)-butenyl 4-diphosphate. This Bacillus cereus (strain ZK / E33L) protein is 4-hydroxy-3-methylbut-2-en-1-yl diphosphate synthase (flavodoxin).